The primary structure comprises 356 residues: GTPase Obg (356 aa).

The 159-residue stretch at 2–160 (ESFVDEVAIE…KFLRLSLKLL (159 aa)) folds into the Obg domain. The region spanning 161 to 329 (ADVGIVGLPN…LLENMDEVFF (169 aa)) is the OBG-type G domain. Residues 167–174 (GLPNAGKS), 192–196 (FTTLS), 215–218 (DIPG), 282–285 (NKID), and 310–312 (SAD) contribute to the GTP site. Positions 174 and 194 each coordinate Mg(2+).

Belongs to the TRAFAC class OBG-HflX-like GTPase superfamily. OBG GTPase family. As to quaternary structure, monomer. Mg(2+) serves as cofactor.

Its subcellular location is the cytoplasm. Its function is as follows. An essential GTPase which binds GTP, GDP and possibly (p)ppGpp with moderate affinity, with high nucleotide exchange rates and a fairly low GTP hydrolysis rate. Plays a role in control of the cell cycle, stress response, ribosome biogenesis and in those bacteria that undergo differentiation, in morphogenesis control. This is GTPase Obg from Leptospira interrogans serogroup Icterohaemorrhagiae serovar copenhageni (strain Fiocruz L1-130).